Consider the following 151-residue polypeptide: uncharacterized protein (151 aa).

This is an uncharacterized protein from Rhodobacter capsulatus (Rhodopseudomonas capsulata).